The following is a 67-amino-acid chain: Large ribosomal subunit protein bL35 (67 aa).

Belongs to the bacterial ribosomal protein bL35 family.

This Leptospira borgpetersenii serovar Hardjo-bovis (strain JB197) protein is Large ribosomal subunit protein bL35.